The following is a 620-amino-acid chain: 1-deoxy-D-xylulose-5-phosphate synthase (620 aa).

Thiamine diphosphate contacts are provided by residues His-80 and 121 to 123 (GHS). Asp-152 contacts Mg(2+). Thiamine diphosphate contacts are provided by residues 153 to 154 (GA), Asn-181, Tyr-288, and Glu-370. Asn-181 is a binding site for Mg(2+).

It belongs to the transketolase family. DXPS subfamily. As to quaternary structure, homodimer. It depends on Mg(2+) as a cofactor. The cofactor is thiamine diphosphate.

It catalyses the reaction D-glyceraldehyde 3-phosphate + pyruvate + H(+) = 1-deoxy-D-xylulose 5-phosphate + CO2. Its pathway is metabolic intermediate biosynthesis; 1-deoxy-D-xylulose 5-phosphate biosynthesis; 1-deoxy-D-xylulose 5-phosphate from D-glyceraldehyde 3-phosphate and pyruvate: step 1/1. In terms of biological role, catalyzes the acyloin condensation reaction between C atoms 2 and 3 of pyruvate and glyceraldehyde 3-phosphate to yield 1-deoxy-D-xylulose-5-phosphate (DXP). This chain is 1-deoxy-D-xylulose-5-phosphate synthase, found in Klebsiella pneumoniae (strain 342).